The following is a 138-amino-acid chain: Protein transport protein got1 homolog (138 aa).

The Cytoplasmic segment spans residues 1 to 7 (MFTDQQK). A helical transmembrane segment spans residues 8–28 (IGAMLSAMGLFFGFLGVLLFL). Topologically, residues 29 to 30 (DR) are lumenal. A helical membrane pass occupies residues 31-51 (NLLALGNLLLVSGIVLILGLQ). The Cytoplasmic segment spans residues 52-62 (KTTKFFAQKKK). The helical transmembrane segment at 63 to 82 (IKGTILFFFGIVVLLVTRWT) threads the bilayer. The Lumenal segment spans residues 83–87 (FVGMV). Residues 88-108 (IEIFGFVNLFGDAFPIVISIL) form a helical membrane-spanning segment. Topologically, residues 109-138 (RKLPIIGNILNHPLVNRLLQKADSGNELPF) are cytoplasmic.

It belongs to the GOT1 family.

It localises to the golgi apparatus membrane. In terms of biological role, may be involved in fusion of ER-derived transport vesicles with the Golgi complex. This is Protein transport protein got1 homolog (golt1) from Dictyostelium discoideum (Social amoeba).